The primary structure comprises 37 residues: Cytochrome b6-f complex subunit 5 (37 aa).

A helical membrane pass occupies residues L5 to A25.

The protein belongs to the PetG family. In terms of assembly, the 4 large subunits of the cytochrome b6-f complex are cytochrome b6, subunit IV (17 kDa polypeptide, PetD), cytochrome f and the Rieske protein, while the 4 small subunits are PetG, PetL, PetM and PetN. The complex functions as a dimer.

Its subcellular location is the plastid. The protein resides in the chloroplast thylakoid membrane. In terms of biological role, component of the cytochrome b6-f complex, which mediates electron transfer between photosystem II (PSII) and photosystem I (PSI), cyclic electron flow around PSI, and state transitions. PetG is required for either the stability or assembly of the cytochrome b6-f complex. This chain is Cytochrome b6-f complex subunit 5, found in Psilotum nudum (Whisk fern).